The following is an 87-amino-acid chain: Small ribosomal subunit protein bS20 (87 aa).

The interval 1 to 22 is disordered; that stretch reads MANIKSQIKRIGTNKKAQERNK.

The protein belongs to the bacterial ribosomal protein bS20 family.

Its function is as follows. Binds directly to 16S ribosomal RNA. The chain is Small ribosomal subunit protein bS20 from Clavibacter michiganensis subsp. michiganensis (strain NCPPB 382).